We begin with the raw amino-acid sequence, 346 residues long: S-adenosylmethionine:tRNA ribosyltransferase-isomerase (346 aa).

The protein belongs to the QueA family. Monomer.

It is found in the cytoplasm. The enzyme catalyses 7-aminomethyl-7-carbaguanosine(34) in tRNA + S-adenosyl-L-methionine = epoxyqueuosine(34) in tRNA + adenine + L-methionine + 2 H(+). It functions in the pathway tRNA modification; tRNA-queuosine biosynthesis. Its function is as follows. Transfers and isomerizes the ribose moiety from AdoMet to the 7-aminomethyl group of 7-deazaguanine (preQ1-tRNA) to give epoxyqueuosine (oQ-tRNA). The chain is S-adenosylmethionine:tRNA ribosyltransferase-isomerase from Chloroherpeton thalassium (strain ATCC 35110 / GB-78).